We begin with the raw amino-acid sequence, 165 residues long: MSIDVNNESGTEVDEQAILDIARYALARMRIHPLSELSVIVVDAEAMEQLHIQWMDLPGPTDVMSFPMDELRPPSKDEEEAPQGLLGDIVLCPEVAAKQGAEAPTEHSMDEELQLLTVHGVLHLLGYDHEEPDEKAEMFGLQAAIVDGWRAEKGLTGPSPAPTVS.

Residues H119, H123, and H129 each contribute to the Zn(2+) site.

The protein belongs to the endoribonuclease YbeY family. Requires Zn(2+) as cofactor.

It localises to the cytoplasm. Functionally, single strand-specific metallo-endoribonuclease involved in late-stage 70S ribosome quality control and in maturation of the 3' terminus of the 16S rRNA. This is Endoribonuclease YbeY from Streptomyces coelicolor (strain ATCC BAA-471 / A3(2) / M145).